Here is a 222-residue protein sequence, read N- to C-terminus: Ribosomal RNA small subunit methyltransferase G (222 aa).

S-adenosyl-L-methionine is bound by residues Gly80, Leu85, and Arg149.

Belongs to the methyltransferase superfamily. RNA methyltransferase RsmG family.

It is found in the cytoplasm. In terms of biological role, specifically methylates the N7 position of a guanine in 16S rRNA. This chain is Ribosomal RNA small subunit methyltransferase G, found in Treponema pallidum (strain Nichols).